The sequence spans 76 residues: uncharacterized protein (76 aa).

Residues 6–60 (LKKNRLEKGFTQEEVAKAAQIGRAYYTMIENGTRKPSVIVSKKIGEKLGFDWTIF) form the HTH cro/C1-type domain. The H-T-H motif DNA-binding region spans 17-36 (QEEVAKAAQIGRAYYTMIEN).

This is an uncharacterized protein from Bacillus subtilis (strain 168).